An 801-amino-acid chain; its full sequence is Zinc finger Y-chromosomal protein (801 aa).

Residue S270 is modified to Phosphoserine. Residues 421-443 form a C2H2-type 1 zinc finger; the sequence is YPCMICGKKFKSRGFLKRHMKNH. Residues 452–474 form a C2H2-type 2; atypical zinc finger; sequence YHCTDCDYTTNKKISLHNHLESH. 11 C2H2-type zinc fingers span residues 484–506, 515–538, 544–566, 572–595, 601–623, 629–652, 658–680, 686–709, 715–737, 743–766, and 772–795; these read IECD…KMVH, HKCK…LAVH, HICV…MRIH, YQCQ…KTKH, FKCD…TLVH, HQCL…ISVH, HKCE…VAVH, HQCR…LSVH, FRCK…MKTH, YQCE…ISIH, and HRCE…MRHH.

Belongs to the krueppel C2H2-type zinc-finger protein family. ZFX/ZFY subfamily.

Its subcellular location is the nucleus. Probable transcriptional activator. Binds to the consensus sequence 5'-AGGCCY-3'. This chain is Zinc finger Y-chromosomal protein (ZFY), found in Homo sapiens (Human).